The primary structure comprises 463 residues: Arginine biosynthesis bifunctional protein ArgJ, chloroplastic (463 aa).

Residues threonine 207, lysine 233, threonine 244, glutamate 331, asparagine 458, and threonine 463 each coordinate substrate. Threonine 244 acts as the Nucleophile in catalysis.

This sequence belongs to the ArgJ family. In terms of assembly, heterodimer of an alpha and a beta chain.

It is found in the plastid. Its subcellular location is the chloroplast. It carries out the reaction N(2)-acetyl-L-ornithine + L-glutamate = N-acetyl-L-glutamate + L-ornithine. The catalysed reaction is L-glutamate + acetyl-CoA = N-acetyl-L-glutamate + CoA + H(+). It participates in amino-acid biosynthesis; L-arginine biosynthesis; L-ornithine and N-acetyl-L-glutamate from L-glutamate and N(2)-acetyl-L-ornithine (cyclic): step 1/1. The protein operates within amino-acid biosynthesis; L-arginine biosynthesis; N(2)-acetyl-L-ornithine from L-glutamate: step 1/4. Functionally, catalyzes two activities which are involved in the cyclic version of arginine biosynthesis: the synthesis of acetylglutamate from glutamate and acetyl-CoA, and of ornithine by transacetylation between acetylornithine and glutamate. The polypeptide is Arginine biosynthesis bifunctional protein ArgJ, chloroplastic (Oryza sativa subsp. japonica (Rice)).